The primary structure comprises 46 residues: Homeobox protein Hox-D4 (46 aa).

Positions 1 to 46 (VNSNYTGGEPKRSRTAYTRQQVLELEKEFLFNRYLTRRRRIQHTLT) form a DNA-binding region, homeobox.

This sequence belongs to the Antp homeobox family. Deformed subfamily. Forms a DNA-binding heterodimer with transcription factor PBX1.

The protein localises to the nucleus. In terms of biological role, sequence-specific transcription factor which is part of a developmental regulatory system that provides cells with specific positional identities on the anterior-posterior axis. The protein is Homeobox protein Hox-D4 (HOXD4) of Ovis aries (Sheep).